Reading from the N-terminus, the 530-residue chain is Cytochrome P450 2U1 (530 aa).

Transmembrane regions (helical) follow at residues 21–41 (LQAV…DWVW), 99–119 (VYGN…LSDF), 247–267 (ICLH…YLPF), and 328–348 (LFYI…NSLL). Residue Cys476 participates in heme binding. Residues 481–501 (LAKMELFLMFVSLMQSFTFAL) form a helical membrane-spanning segment.

This sequence belongs to the cytochrome P450 family. Heme serves as cofactor. Specifically expressed in thymus and brain. In brain, expressed in cortex, cerebellum, olfactory bulbs, pons and medulla and the limbic structures (at protein level).

It is found in the endoplasmic reticulum membrane. Its subcellular location is the microsome membrane. It localises to the mitochondrion inner membrane. It catalyses the reaction an omega-methyl-long-chain fatty acid + reduced [NADPH--hemoprotein reductase] + O2 = an omega-hydroxy-long-chain fatty acid + oxidized [NADPH--hemoprotein reductase] + H2O + H(+). The catalysed reaction is (5Z,8Z,11Z,14Z)-eicosatetraenoate + reduced [NADPH--hemoprotein reductase] + O2 = 19-hydroxy-(5Z,8Z,11Z,14Z)-eicosatetraenoate + oxidized [NADPH--hemoprotein reductase] + H2O + H(+). It carries out the reaction (5Z,8Z,11Z,14Z)-eicosatetraenoate + reduced [NADPH--hemoprotein reductase] + O2 = 20-hydroxy-(5Z,8Z,11Z,14Z)-eicosatetraenoate + oxidized [NADPH--hemoprotein reductase] + H2O + H(+). The enzyme catalyses N-[(5Z,8Z,11Z,14Z)-eicosatetraenoyl]-serotonin + reduced [NADPH--hemoprotein reductase] + O2 = 2-oxo-N-[(5Z,8Z,11Z,14Z)-eicosatetraenoyl]-serotonin + oxidized [NADPH--hemoprotein reductase] + H2O + H(+). A cytochrome P450 monooxygenase involved in the metabolism of arachidonic acid and its conjugates. Mechanistically, uses molecular oxygen inserting one oxygen atom into a substrate, and reducing the second into a water molecule, with two electrons provided by NADPH via cytochrome P450 reductase (CPR; NADPH-ferrihemoprotein reductase). Acts as an omega and omega-1 hydroxylase for arachidonic acid and possibly for other long chain fatty acids. May modulate the arachidonic acid signaling pathway and play a role in other fatty acid signaling processes. May down-regulate the biological activities of N-arachidonoyl-serotonin, an endocannabinoid that has anti-nociceptive effects through inhibition of fatty acid amide hydrolase FAAH, TRPV1 receptor and T-type calcium channels. Catalyzes C-2 oxidation of the indole ring of N-arachidonoyl-serotonin forming a less active product 2-oxo-N-arachidonoyl-serotonin. The protein is Cytochrome P450 2U1 (Cyp2u1) of Rattus norvegicus (Rat).